A 471-amino-acid polypeptide reads, in one-letter code: ATP synthase subunit beta 1 (471 aa).

Residue 157–164 coordinates ATP; sequence GGAGVGKT.

This sequence belongs to the ATPase alpha/beta chains family. F-type ATPases have 2 components, CF(1) - the catalytic core - and CF(0) - the membrane proton channel. CF(1) has five subunits: alpha(3), beta(3), gamma(1), delta(1), epsilon(1). CF(0) has three main subunits: a(1), b(2) and c(9-12). The alpha and beta chains form an alternating ring which encloses part of the gamma chain. CF(1) is attached to CF(0) by a central stalk formed by the gamma and epsilon chains, while a peripheral stalk is formed by the delta and b chains.

The protein localises to the cell inner membrane. The catalysed reaction is ATP + H2O + 4 H(+)(in) = ADP + phosphate + 5 H(+)(out). In terms of biological role, produces ATP from ADP in the presence of a proton gradient across the membrane. The catalytic sites are hosted primarily by the beta subunits. The polypeptide is ATP synthase subunit beta 1 (Pelobacter propionicus (strain DSM 2379 / NBRC 103807 / OttBd1)).